We begin with the raw amino-acid sequence, 301 residues long: tRNA-cytidine(32) 2-sulfurtransferase (301 aa).

Positions 55 to 60 (SGGKDS) match the PP-loop motif motif. The [4Fe-4S] cluster site is built by Cys130, Cys133, and Cys221.

It belongs to the TtcA family. Homodimer. Requires Mg(2+) as cofactor. [4Fe-4S] cluster serves as cofactor.

It is found in the cytoplasm. It catalyses the reaction cytidine(32) in tRNA + S-sulfanyl-L-cysteinyl-[cysteine desulfurase] + AH2 + ATP = 2-thiocytidine(32) in tRNA + L-cysteinyl-[cysteine desulfurase] + A + AMP + diphosphate + H(+). It participates in tRNA modification. In terms of biological role, catalyzes the ATP-dependent 2-thiolation of cytidine in position 32 of tRNA, to form 2-thiocytidine (s(2)C32). The sulfur atoms are provided by the cysteine/cysteine desulfurase (IscS) system. The sequence is that of tRNA-cytidine(32) 2-sulfurtransferase from Acinetobacter baumannii (strain SDF).